The sequence spans 147 residues: MSIRLENLSYTPGARKEKHRKGRGHAAGKGKQAGRGQSGQKKRSTVRLGFEGGQNPWFRRVPKRGFRNFNKKEYEIFNLSDLESRYQDGDTVSLESLYLKKVLKKRNLKAKLLANGDLTKKLTVTTNAFSIAAQKKIEEKGGKIEVR.

The interval 1 to 46 (MSIRLENLSYTPGARKEKHRKGRGHAAGKGKQAGRGQSGQKKRSTV) is disordered. Residues 16-28 (KEKHRKGRGHAAG) are compositionally biased toward basic residues.

Belongs to the universal ribosomal protein uL15 family. As to quaternary structure, part of the 50S ribosomal subunit.

Binds to the 23S rRNA. In Mesomycoplasma hyopneumoniae (strain 232) (Mycoplasma hyopneumoniae), this protein is Large ribosomal subunit protein uL15.